Here is a 256-residue protein sequence, read N- to C-terminus: Proteasome subunit beta type-5 (256 aa).

A propeptide spans 1–55 (CNMALADIVRLPPASEAPFAPLGAPRDLSGPPSKLAVRPWGGADLPGPGLQLLHG) (removed in mature form). Catalysis depends on Thr56, which acts as the Nucleophile.

This sequence belongs to the peptidase T1B family. In terms of assembly, the 26S proteasome consists of a 20S proteasome core and two 19S regulatory subunits. The 20S proteasome core is a barrel-shaped complex made of 28 subunits that are arranged in four stacked rings. The two outer rings are each formed by seven alpha subunits, and the two inner rings are formed by seven beta subunits. The proteolytic activity is exerted by three beta-subunits PSMB5, PSMB6 and PSMB7. Directly interacts with POMP. Interacts with ABCB1 and TAP1.

It is found in the cytoplasm. The protein resides in the nucleus. The enzyme catalyses Cleavage of peptide bonds with very broad specificity.. Functionally, component of the 20S core proteasome complex involved in the proteolytic degradation of most intracellular proteins. This complex plays numerous essential roles within the cell by associating with different regulatory particles. Associated with two 19S regulatory particles, forms the 26S proteasome and thus participates in the ATP-dependent degradation of ubiquitinated proteins. The 26S proteasome plays a key role in the maintenance of protein homeostasis by removing misfolded or damaged proteins that could impair cellular functions, and by removing proteins whose functions are no longer required. Associated with the PA200 or PA28, the 20S proteasome mediates ubiquitin-independent protein degradation. This type of proteolysis is required in several pathways including spermatogenesis (20S-PA200 complex) or generation of a subset of MHC class I-presented antigenic peptides (20S-PA28 complex). Within the 20S core complex, PSMB5 displays a chymotrypsin-like activity. This is Proteasome subunit beta type-5 (PSMB5) from Gallus gallus (Chicken).